The chain runs to 360 residues: Transcription factor MYB39 (360 aa).

HTH myb-type domains follow at residues 10-62 (DKGV…MNYL) and 63-117 (RPDI…RKKL). DNA-binding regions (H-T-H motif) lie at residues 38-62 (WRSL…MNYL) and 90-113 (WSKI…NTHM). The disordered stretch occupies residues 299–324 (PSTGSVSVSPETTSLNHPSTAQHSSG).

Its subcellular location is the nucleus. The polypeptide is Transcription factor MYB39 (MYB39) (Arabidopsis thaliana (Mouse-ear cress)).